The following is a 124-amino-acid chain: T cell receptor beta variable 13 (124 aa).

The first 31 residues, 1–31 (MLSPDLPDSAWNTRLLCRVMLCLLGAGSVAA), serve as a signal peptide directing secretion. The Ig-like domain occupies 32–124 (GVIQSPRHLI…SALYFCASSL (93 aa)). Cysteine 52 and cysteine 120 form a disulfide bridge. Asparagine 106 carries N-linked (GlcNAc...) asparagine glycosylation.

Alpha-beta TR is a heterodimer composed of an alpha and beta chain; disulfide-linked. The alpha-beta TR is associated with the transmembrane signaling CD3 coreceptor proteins to form the TR-CD3 (TcR or TCR). The assembly of alpha-beta TR heterodimers with CD3 occurs in the endoplasmic reticulum where a single alpha-beta TR heterodimer associates with one CD3D-CD3E heterodimer, one CD3G-CD3E heterodimer and one CD247 homodimer forming a stable octameric structure. CD3D-CD3E and CD3G-CD3E heterodimers preferentially associate with TR alpha and TR beta chains, respectively. The association of the CD247 homodimer is the last step of TcR assembly in the endoplasmic reticulum and is required for transport to the cell surface.

It is found in the cell membrane. In terms of biological role, v region of the variable domain of T cell receptor (TR) beta chain that participates in the antigen recognition. Alpha-beta T cell receptors are antigen specific receptors which are essential to the immune response and are present on the cell surface of T lymphocytes. Recognize peptide-major histocompatibility (MH) (pMH) complexes that are displayed by antigen presenting cells (APC), a prerequisite for efficient T cell adaptive immunity against pathogens. Binding of alpha-beta TR to pMH complex initiates TR-CD3 clustering on the cell surface and intracellular activation of LCK that phosphorylates the ITAM motifs of CD3G, CD3D, CD3E and CD247 enabling the recruitment of ZAP70. In turn ZAP70 phosphorylates LAT, which recruits numerous signaling molecules to form the LAT signalosome. The LAT signalosome propagates signal branching to three major signaling pathways, the calcium, the mitogen-activated protein kinase (MAPK) kinase and the nuclear factor NF-kappa-B (NF-kB) pathways, leading to the mobilization of transcription factors that are critical for gene expression and essential for T cell growth and differentiation. The T cell repertoire is generated in the thymus, by V-(D)-J rearrangement. This repertoire is then shaped by intrathymic selection events to generate a peripheral T cell pool of self-MH restricted, non-autoaggressive T cells. Post-thymic interaction of alpha-beta TR with the pMH complexes shapes TR structural and functional avidity. In Homo sapiens (Human), this protein is T cell receptor beta variable 13.